Consider the following 345-residue polypeptide: CCAAT/enhancer-binding protein beta (345 aa).

Residues 1 to 24 are required for Lys-174 sumoylation; it reads MQRLVAWDPACLPLPPPPPAFKSM. Asymmetric dimethylarginine; by CARM1 is present on arginine 3. The tract at residues 24-135 is required for MYC transcriptional repression; it reads MEVANFYYEA…YGGKNCKKPA (112 aa). Lysine 43 bears the N6-acetyllysine; alternate mark. The residue at position 43 (lysine 43) is an N6-methylated lysine; alternate. 2 disordered regions span residues 46-67 and 79-116; these read PAAP…GSIG and LEPL…QHHD. Positions 47-59 are enriched in pro residues; that stretch reads AAPPAARPGPRPP. Low complexity predominate over residues 84-100; sequence APQAPAPATATDTFEAA. The 9aaTAD motif lies at 116 to 124; the sequence is DFLSDLFSD. 2 positions are modified to N6-acetyllysine; by KAT2A and KAT2B: lysine 129 and lysine 132. Lysine 133 bears the N6-acetyllysine; by KAT2A and KAT2B; alternate mark. Residue lysine 133 forms a Glycyl lysine isopeptide (Lys-Gly) (interchain with G-Cter in SUMO2); alternate linkage. Residues 157 to 178 form a disordered region; sequence FAPLHPPPPPPPPPAELKAEPG. Residues 160–171 show a composition bias toward pro residues; the sequence is LHPPPPPPPPPA. Residue lysine 174 forms a Glycyl lysine isopeptide (Lys-Gly) (interchain with G-Cter in SUMO2); alternate linkage. Lysine 174 participates in a covalent cross-link: Glycyl lysine isopeptide (Lys-Gly) (interchain with G-Cter in SUMO); alternate. Residues lysine 185 and lysine 187 each participate in a glycyl lysine isopeptide (Lys-Gly) (interchain with G-Cter in SUMO2) cross-link. Over residues 218-232 the composition is skewed to low complexity; that stretch reads SGSSGSLSTSSSSSP. The interval 218–271 is disordered; sequence SGSSGSLSTSSSSSPPGTPSPADAKAPPTACYAGAAPAPSQVKSKAKKTVDKHS. Phosphothreonine; by GSK3-beta is present on threonine 226. 2 O-linked (GlcNAc) serine glycosylation sites follow: serine 227 and serine 228. Serine 231 carries the phosphoserine; by GSK3-beta modification. Residue threonine 235 is modified to Phosphothreonine; by RPS6KA1, CDK2 and MAPK. Residues lysine 260 and lysine 262 each participate in a glycyl lysine isopeptide (Lys-Gly) (interchain with G-Cter in SUMO2) cross-link. Threonine 266 is subject to Phosphothreonine; by RPS6KA1 and PKC/PRKCA. In terms of domain architecture, bZIP spans 271–334; that stretch reads SDEYKIRRER…STLRNLFKQL (64 aa). Residues 275-295 form a basic motif region; the sequence is KIRRERNNIAVRKSRDKAKMR. A Phosphoserine; by PKC/PRKCA modification is found at serine 288. The interval 297 to 304 is leucine-zipper; that stretch reads LETQHKVL. A Phosphoserine; by CaMK2 modification is found at serine 325. Residue lysine 332 forms a Glycyl lysine isopeptide (Lys-Gly) (interchain with G-Cter in SUMO2) linkage.

Belongs to the bZIP family. C/EBP subfamily. Binds DNA as a homodimer and as a heterodimer. Interacts with ATF4. Binds DNA as a heterodimer with ATF4. Interacts with MYB; within the complex, MYB and CEBPB bind to different promoter regions. Can form stable heterodimers with CEBPD. Can form stable heterodimers with CEBPA and CEBPE. Interacts with SIX1. Isoform 2 and isoform 3 also form heterodimers. Interacts with TRIM28 and PTGES2. Interacts with PRDM16. Interacts with CCDC85B. Forms a complex with THOC5. Interacts with ZNF638; this interaction increases transcriptional activation. Interacts with CIDEA and CIDEC; these interactions increase transcriptional activation of a subset of CEBPB downstream target genes. Interacts with DDIT3/CHOP. Interacts with EP300; recruits EP300 to chromatin. Interacts with RORA; the interaction disrupts interaction with EP300. Interacts (not methylated) with MED23, MED26, SMARCA2, SMARCB1 and SMARCC1. Interacts with KAT2A and KAT2B. Interacts with ATF5; EP300 is required for ATF5 and CEBPB interaction and DNA binding. Interacts with NFE2L1; the heterodimer represses expression of DSPP during odontoblast differentiation. In terms of processing, methylated. Methylation at Arg-3 by CARM1 and at Lys-43 by EHMT2 inhibit transactivation activity. Methylation is probably inhibited by phosphorylation at Thr-235. Post-translationally, sumoylated by polymeric chains of SUMO2 or SUMO3. Sumoylation at Lys-174 is required for inhibition of T-cells proliferation. In adipocytes, sumoylation at Lys-174 by PIAS1 leads to ubiquitination and subsequent proteasomal degradation. Desumoylated by SENP2, which abolishes ubiquitination and stabilizes protein levels. Ubiquitinated, leading to proteasomal degradation. In terms of processing, phosphorylated at Thr-235 by MAPK and CDK2, serves to prime phosphorylation at Thr-226 and Ser-231 by GSK3B and acquire DNA-binding as well as transactivation activities, required to induce adipogenesis. MAPK and CDK2 act sequentially to maintain Thr-235 in the primed phosphorylated state during mitotical cloning expansion and thereby progression of terminal differentiation. Phosphorylation at Thr-266 enhances transactivation activity. Phosphorylation at Ser-325 in response to calcium increases transactivation activity. Phosphorylated at Thr-235 by RPS6KA1. Post-translationally, O-glycosylated, glycosylation at Ser-227 and Ser-228 prevents phosphorylation on Thr-235, Ser-231 and Thr-226 and DNA binding activity which delays the adipocyte differentiation program. Acetylated. Acetylation at Lys-43 is an important and dynamic regulatory event that contributes to its ability to transactivate target genes, including those associated with adipogenesis and adipocyte function. Deacetylation by HDAC1 represses its transactivation activity. Acetylated by KAT2A and KAT2B within a cluster of lysine residues between amino acids 129-133, this acetylation is strongly induced by glucocorticoid treatment and enhances transactivation activity. Expressed at low levels in the lung, kidney and spleen.

It is found in the nucleus. It localises to the cytoplasm. Its function is as follows. Important transcription factor regulating the expression of genes involved in immune and inflammatory responses. Also plays a significant role in adipogenesis, as well as in the gluconeogenic pathway, liver regeneration, and hematopoiesis. The consensus recognition site is 5'-T[TG]NNGNAA[TG]-3'. Its functional capacity is governed by protein interactions and post-translational protein modifications. During early embryogenesis, plays essential and redundant roles with CEBPA. Has a promitotic effect on many cell types such as hepatocytes and adipocytes but has an antiproliferative effect on T-cells by repressing MYC expression, facilitating differentiation along the T-helper 2 lineage. Binds to regulatory regions of several acute-phase and cytokines genes and plays a role in the regulation of acute-phase reaction and inflammation. Also plays a role in intracellular bacteria killing. During adipogenesis, is rapidly expressed and, after activation by phosphorylation, induces CEBPA and PPARG, which turn on the series of adipocyte genes that give rise to the adipocyte phenotype. The delayed transactivation of the CEBPA and PPARG genes by CEBPB appears necessary to allow mitotic clonal expansion and thereby progression of terminal differentiation. Essential for female reproduction because of a critical role in ovarian follicle development. Restricts osteoclastogenesis: together with NFE2L1; represses expression of DSPP during odontoblast differentiation. In terms of biological role, essential for gene expression induction in activated macrophages. Plays a major role in immune responses such as CD4(+) T-cell response, granuloma formation and endotoxin shock. Not essential for intracellular bacteria killing. Acts as a dominant negative through heterodimerization with isoform 2. Promotes osteoblast differentiation and osteoclastogenesis. The sequence is that of CCAAT/enhancer-binding protein beta from Homo sapiens (Human).